Consider the following 294-residue polypeptide: Urease accessory protein UreD (294 aa).

Residues 1–22 (MSVEKPVAAGRQNSKATGRHKG) form a disordered region.

The protein belongs to the UreD family. UreD, UreF and UreG form a complex that acts as a GTP-hydrolysis-dependent molecular chaperone, activating the urease apoprotein by helping to assemble the nickel containing metallocenter of UreC. The UreE protein probably delivers the nickel.

The protein resides in the cytoplasm. Its function is as follows. Required for maturation of urease via the functional incorporation of the urease nickel metallocenter. This is Urease accessory protein UreD from Alcanivorax borkumensis (strain ATCC 700651 / DSM 11573 / NCIMB 13689 / SK2).